We begin with the raw amino-acid sequence, 70 residues long: Large ribosomal subunit protein bL32c (70 aa).

Disordered stretches follow at residues 1 to 20 (MAVP…KNVR) and 51 to 70 (NDDS…LDDP). Residues 52-61 (DDSSGSSESK) show a composition bias toward polar residues.

Belongs to the bacterial ribosomal protein bL32 family.

It is found in the plastid. The protein resides in the chloroplast. In Pinus thunbergii (Japanese black pine), this protein is Large ribosomal subunit protein bL32c (rpl32).